The sequence spans 496 residues: Transmembrane protein 104 (496 aa).

At 1–10 (MAGEITETGE) the chain is on the cytoplasmic side. A helical transmembrane segment spans residues 11 to 31 (LYSPYVGLVYMFNLIVGTGAL). The Extracellular segment spans residues 32–36 (TMPKA). Residues 37–57 (FATAGWLVSLVLLVFVGFMSF) traverse the membrane as a helical segment. Over 58–146 (VTTTFAMEAM…SMFFNKVGVN (89 aa)) the chain is Cytoplasmic. The interval 81-100 (THKEEDDEDSSTASDSDLLS) is disordered. Low complexity predominate over residues 91–100 (STASDSDLLS). A helical transmembrane segment spans residues 147–167 (LFYFCIITYLYGDLAIYAAAV). Over 168–204 (PVSLMQVTCSVSGNDSCGVDTDARYNDTDLCWGPLRR) the chain is Extracellular. Residue asparagine 193 is glycosylated (N-linked (GlcNAc...) asparagine). Residues 205 to 225 (VDVYRIYLAIFTVLLGPFTFF) traverse the membrane as a helical segment. The Cytoplasmic portion of the chain corresponds to 226–233 (DVQKTKYL). Residues 234 to 254 (QILTSMMRWIAFAIMIVLALV) traverse the membrane as a helical segment. Topologically, residues 255–265 (RIGKGQGEGHP) are extracellular. A helical membrane pass occupies residues 266–286 (PLANFLGVQNLFGVCVYSFMC). At 287 to 306 (QHSLPSLITPISSKRHITRL) the chain is on the cytoplasmic side. Residues 307-327 (LFLDYALILAFYGLLSFTAIF) form a helical membrane-spanning segment. Residues 328–354 (CFRGDSLMDMYTLNFARCDVVGLAAVR) lie on the Extracellular side of the membrane. Residues 355–375 (FFLGLFPVFTISTNFPIIAVT) traverse the membrane as a helical segment. Residues 376 to 397 (LRNNWKTLFHREGGTYPWVVDR) are Cytoplasmic-facing. A helical membrane pass occupies residues 398–418 (VVFPTITLVPPILVAFCTHDL). Topologically, residues 419-421 (ESL) are extracellular. A helical transmembrane segment spans residues 422-442 (VAITGAYAGTGIQYVIPAFLV). Topologically, residues 443-470 (YLCRKDTQLTFGYGTVNKHRSPFRHTFW) are cytoplasmic. The chain crosses the membrane as a helical span at residues 471–491 (VAFVLLWAFSCFFFVTAYIVL). The Extracellular segment spans residues 492–496 (KETQL).

The protein belongs to the TMEM104 family.

Its subcellular location is the membrane. This chain is Transmembrane protein 104 (Tmem104), found in Mus musculus (Mouse).